The primary structure comprises 289 residues: Pantothenate synthetase (289 aa).

28-35 contacts ATP; the sequence is MGCLHEGH. Catalysis depends on His35, which acts as the Proton donor. Gln59 lines the (R)-pantoate pocket. Residue Gln59 participates in beta-alanine binding. An ATP-binding site is contributed by 147–150; the sequence is GLKD. Gln153 contributes to the (R)-pantoate binding site. Residues Val176 and 184–187 contribute to the ATP site; that span reads MSSR.

The protein belongs to the pantothenate synthetase family. Homodimer.

It localises to the cytoplasm. It carries out the reaction (R)-pantoate + beta-alanine + ATP = (R)-pantothenate + AMP + diphosphate + H(+). It functions in the pathway cofactor biosynthesis; (R)-pantothenate biosynthesis; (R)-pantothenate from (R)-pantoate and beta-alanine: step 1/1. Functionally, catalyzes the condensation of pantoate with beta-alanine in an ATP-dependent reaction via a pantoyl-adenylate intermediate. The polypeptide is Pantothenate synthetase (Magnetococcus marinus (strain ATCC BAA-1437 / JCM 17883 / MC-1)).